Consider the following 137-residue polypeptide: Large ribosomal subunit protein uL16 (137 aa).

The protein belongs to the universal ribosomal protein uL16 family. As to quaternary structure, part of the 50S ribosomal subunit.

In terms of biological role, binds 23S rRNA and is also seen to make contacts with the A and possibly P site tRNAs. The protein is Large ribosomal subunit protein uL16 of Streptococcus sanguinis (strain SK36).